We begin with the raw amino-acid sequence, 300 residues long: MADRRDHRIIDGKAVQQRLLAGIRAELEAAAETHPVGRLVSISIGPSPEIEVYVRNQARAAATAGLPFEQVVWEASATQEACKRKIAALNDDPSVLGIILQRPVPAHIHVRSLQSAIHPLKDVEGMNPASIGNIVYNDIALAPCTAAAAVEMVRATGLPLPGLEVVMIGHSEIVGKPVAFLLMAEGATVTVCHHMTRSVAMHSRRADVVIVAVGKAHLIGPEMIKPGAAVIDIGINQVTDAAGKVRILGDVDTEAVREVAGWITPVPGGVGPVTVAMLMRNALTAHRRQVAAGWLEAAKA.

NADP(+)-binding positions include 169–171 (GHS) and Ile235.

Belongs to the tetrahydrofolate dehydrogenase/cyclohydrolase family. As to quaternary structure, homodimer.

The catalysed reaction is (6R)-5,10-methylene-5,6,7,8-tetrahydrofolate + NADP(+) = (6R)-5,10-methenyltetrahydrofolate + NADPH. It carries out the reaction (6R)-5,10-methenyltetrahydrofolate + H2O = (6R)-10-formyltetrahydrofolate + H(+). Its pathway is one-carbon metabolism; tetrahydrofolate interconversion. Its function is as follows. Catalyzes the oxidation of 5,10-methylenetetrahydrofolate to 5,10-methenyltetrahydrofolate and then the hydrolysis of 5,10-methenyltetrahydrofolate to 10-formyltetrahydrofolate. This Rhodobacter capsulatus (strain ATCC BAA-309 / NBRC 16581 / SB1003) protein is Bifunctional protein FolD.